Consider the following 391-residue polypeptide: MSGIVPEIPGEQAPPDAAHQLKVDVARLLQKPKLNFPGAQPVSFARKHIEEELFKRDYYVCEKSDGLRCLMYVTWENNPDTGPQQVTYLITRNNEFFFIPMVHFPSNDGKPLQDTIVDGELVLTKAEPRSLHFLMFDCLACNKILLTGRPLDKRLGYLNAAISHPLKEYLHKNPEVARDFPFSVRVKDMQFAYNVMNVFASFPHLPHITDGLIFTCRDHPYVSGTDERILKWKKQDENSVDFLMTMKFPIFEDTNGESWTDYDAKPEITLLVWTGRDGSRPYGELYLTDEEWDNLKALEEPLEERVVECIKDDKKRWRYLRFRDDKTNANYITTVEKVIDSIDDPVSEKNLLDAAPKIKELWKERNRRPRDEDRKRVGGDDHDHGAKRARQ.

K63 functions as the N6-GMP-lysine intermediate in the catalytic mechanism. The interval 363–391 (KERNRRPRDEDRKRVGGDDHDHGAKRARQ) is disordered.

It belongs to the eukaryotic GTase family. As to quaternary structure, heterodimer. The mRNA-capping enzyme is composed of two separate chains alpha and beta, respectively a mRNA guanylyltransferase and an mRNA 5'-triphosphate monophosphatase.

It localises to the nucleus. The enzyme catalyses a 5'-end diphospho-ribonucleoside in mRNA + GTP + H(+) = a 5'-end (5'-triphosphoguanosine)-ribonucleoside in mRNA + diphosphate. Second step of mRNA capping. Transfer of the GMP moiety of GTP to the 5'-end of RNA via an enzyme-GMP covalent reaction intermediate. In Yarrowia lipolytica (strain CLIB 122 / E 150) (Yeast), this protein is mRNA-capping enzyme subunit alpha (CEG1).